The sequence spans 172 residues: 3-hydroxydecanoyl-[acyl-carrier-protein] dehydratase (172 aa).

The active site involves H71.

The protein belongs to the thioester dehydratase family. FabA subfamily. In terms of assembly, homodimer.

It localises to the cytoplasm. It carries out the reaction a (3R)-hydroxyacyl-[ACP] = a (2E)-enoyl-[ACP] + H2O. It catalyses the reaction (3R)-hydroxydecanoyl-[ACP] = (2E)-decenoyl-[ACP] + H2O. The enzyme catalyses (2E)-decenoyl-[ACP] = (3Z)-decenoyl-[ACP]. It functions in the pathway lipid metabolism; fatty acid biosynthesis. Necessary for the introduction of cis unsaturation into fatty acids. Catalyzes the dehydration of (3R)-3-hydroxydecanoyl-ACP to E-(2)-decenoyl-ACP and then its isomerization to Z-(3)-decenoyl-ACP. Can catalyze the dehydratase reaction for beta-hydroxyacyl-ACPs with saturated chain lengths up to 16:0, being most active on intermediate chain length. The polypeptide is 3-hydroxydecanoyl-[acyl-carrier-protein] dehydratase (Escherichia coli (strain 55989 / EAEC)).